Here is a 201-residue protein sequence, read N- to C-terminus: Orotate phosphoribosyltransferase (201 aa).

5-phospho-alpha-D-ribose 1-diphosphate is bound at residue 113-121 (EDIITTGKS). Residues Thr117 and Arg145 each contribute to the orotate site.

This sequence belongs to the purine/pyrimidine phosphoribosyltransferase family. PyrE subfamily. Homodimer. It depends on Mg(2+) as a cofactor.

The catalysed reaction is orotidine 5'-phosphate + diphosphate = orotate + 5-phospho-alpha-D-ribose 1-diphosphate. It functions in the pathway pyrimidine metabolism; UMP biosynthesis via de novo pathway; UMP from orotate: step 1/2. Functionally, catalyzes the transfer of a ribosyl phosphate group from 5-phosphoribose 1-diphosphate to orotate, leading to the formation of orotidine monophosphate (OMP). This is Orotate phosphoribosyltransferase from Helicobacter pylori (strain P12).